The primary structure comprises 278 residues: Undecaprenyl-diphosphatase (278 aa).

6 helical membrane-spanning segments follow: residues 44–64 (FLEMFNIVIQLGAILAVMTIY), 84–104 (WQLWAKVVIACIPSILIAVPL), 112–132 (FNFMVPIAIALIVYGIAFIWI), 187–207 (SVAADFTFFLGIPTMFGYSGL), 224–244 (VWILLVASVTAYLVSLVVIRF), and 254–274 (FTVFGYYRIILGAILLVYAFI).

This sequence belongs to the UppP family.

It localises to the cell membrane. It catalyses the reaction di-trans,octa-cis-undecaprenyl diphosphate + H2O = di-trans,octa-cis-undecaprenyl phosphate + phosphate + H(+). Functionally, catalyzes the dephosphorylation of undecaprenyl diphosphate (UPP). Confers resistance to bacitracin. The sequence is that of Undecaprenyl-diphosphatase from Streptococcus suis (strain 98HAH33).